A 676-amino-acid polypeptide reads, in one-letter code: Envelope glycoprotein (676 aa).

A signal peptide spans Met-1–Ser-32. Residues Ile-33–Gln-650 lie on the Extracellular side of the membrane. An N-linked (GlcNAc...) asparagine; by host glycan is attached at Asn-40. 5 cysteine pairs are disulfide-bonded: Cys-53–Cys-609, Cys-108–Cys-135, Cys-121–Cys-147, Cys-511–Cys-556, and Cys-601–Cys-608. Positions Arg-54 to Glu-201 are receptor-binding. N-linked (GlcNAc...) asparagine; by host glycans are attached at residues Asn-204, Asn-228, Asn-238, Asn-257, Asn-268, Asn-296, Asn-317, Asn-333, Asn-346, Asn-386, and Asn-413. The segment at Glu-305–Thr-485 is mucin-like region. Polar residues predominate over residues Ala-315 to Thr-335. The segment at Ala-315–Glu-337 is disordered. Polar residues predominate over residues Thr-373 to Thr-391. Disordered stretches follow at residues Thr-373 to Pro-392 and Thr-402 to Leu-479. Residues Asp-414–Ala-432 show a composition bias toward low complexity. A compositionally biased stretch (polar residues) spans Glu-433–Thr-464. Asn-436, Asn-454, and Asn-462 each carry an N-linked (GlcNAc...) asparagine; by host glycan. Positions Gly-524–Ala-539 are fusion peptide. A coiled-coil region spans residues Leu-554–Gln-595. N-linked (GlcNAc...) asparagine; by host glycosylation is present at Asn-563. The stretch at Trp-615–Thr-634 forms a coiled coil. Asn-618 carries an N-linked (GlcNAc...) asparagine; by host glycan. The helical transmembrane segment at Trp-651–Ile-671 threads the bilayer. Residues Cys-670 and Cys-672 are each lipidated (S-palmitoyl cysteine; by host). The Cytoplasmic segment spans residues Cys-672–Phe-676.

The protein belongs to the filoviruses glycoprotein family. In terms of assembly, homotrimer; each monomer consists of a GP1 and a GP2 subunit linked by disulfide bonds. The resulting peplomers (GP1,2) protrude from the virus surface as spikes. Interacts with host integrin alpha-V/ITGAV. Interacts with host CLEC10A. Binds also to host CD209 and CLEC4M/DC-SIGN(R). Interacts with host FOLR1. Interacts with BST2; this interaction inhibits the antiviral effect of BST2 and this allows viral release from infected cells. Interacts with host FCN1; this interaction enhances viral entry. Interacts with host TLR4; this interaction induces cell death in T-lymphocytes or proinflammatory cytokines and SOCS1 production in monocytes. Interacts with host entry receptor NPC1. As to quaternary structure, GP1 and GP2delta are part of GP1,2delta soluble complexes released by ectodomain shedding. Post-translationally, the signal peptide region modulates GP's high mannose glycosylation, thereby determining the efficiency of the interactions with DC-SIGN(R). N-glycosylated. In terms of processing, O-glycosylated in the mucin-like region. Post-translationally, palmitoylation of GP2 is not required for its function. Specific enzymatic cleavages in vivo yield mature proteins. The precursor is processed into GP1 and GP2 by host cell furin in the trans Golgi, and maybe by other host proteases, to yield the mature GP1 and GP2 proteins. The cleavage site corresponds to the furin optimal cleavage sequence [KR]-X-[KR]-R. This cleavage does not seem to be required for function. After the internalization of the virus into cell endosomes, GP1 C-terminus is removed by the endosomal proteases cathepsin B, cathepsin L, or both, leaving a 19-kDa N-terminal fragment which is further digested by cathepsin B. Proteolytic processing of GP1,2 by host ADAM17 can remove the transmembrane anchor of GP2 and leads to shedding of complexes consisting in GP1 and truncated GP2 (GP1,2delta).

Its subcellular location is the virion membrane. It is found in the host cell membrane. The protein resides in the secreted. Its function is as follows. Trimeric GP1,2 complexes form the virion surface spikes and mediate the viral entry processes, with GP1 acting as the receptor-binding subunit and GP2 as the membrane fusion subunit. At later times of infection, down-regulates the expression of various host cell surface molecules that are essential for immune surveillance and cell adhesion. Down-modulates several integrins including ITGA1, ITGA2, ITGA3, ITGA4, ITGA5, ITGA6, ITGAV and ITGB1. This decrease in cell adhesion molecules may lead to cell detachment, contributing to the disruption of blood vessel integrity and hemorrhages developed during infection (cytotoxicity). Interacts with host TLR4 and thereby stimulates the differentiation and activation of monocytes leading to bystander death of T-lymphocytes. Down-regulates as well the function of host natural killer cells. Counteracts the antiviral effect of host BST2/tetherin that restricts release of progeny virions from infected cells. However, cooperates with VP40 and host BST2 to activate canonical NF-kappa-B pathway in a manner dependent on neddylation. Functions as a decoy for anti-GP1,2 antibodies thereby contributing to viral immune evasion. Interacts and activates host macrophages and dendritic cells inducing up-regulation of cytokine transcription. This effect is mediated throught activation of host TLR4. Functionally, responsible for binding to the receptor(s) on target cells. Interacts with CD209/DC-SIGN and CLEC4M/DC-SIGNR which act as cofactors for virus entry into dendritic cells (DCs) and endothelial cells. Binding to the macrophage specific lectin CLEC10A also seems to enhance virus infectivity. Interaction with FOLR1/folate receptor alpha may be a cofactor for virus entry in some cell types, although results are contradictory. Members of the Tyro3 receptor tyrosine kinase family also seem to be cell entry factors in filovirus infection. Once attached, the virions are internalized through clathrin-dependent endocytosis and/or macropinocytosis. After internalization of the virus into the endosomes of the host cell, proteolysis of GP1 by two cysteine proteases, CTSB/cathepsin B and CTSL/cathepsin L removes the glycan cap and allows GP1 binding to the host entry receptor NPC1. NPC1-binding, Ca(2+) and acidic pH induce a conformational change of GP2, which unmasks its fusion peptide and permit membranes fusion. In terms of biological role, acts as a class I viral fusion protein. Under the current model, the protein has at least 3 conformational states: pre-fusion native state, pre-hairpin intermediate state, and post-fusion hairpin state. During viral and target cell membrane fusion, the coiled coil regions (heptad repeats) assume a trimer-of-hairpins structure, positioning the fusion peptide in close proximity to the C-terminal region of the ectodomain. The formation of this structure appears to drive apposition and subsequent fusion of viral and target cell membranes. Responsible for penetration of the virus into the cell cytoplasm by mediating the fusion of the membrane of the endocytosed virus particle with the endosomal membrane. Low pH in endosomes induces an irreversible conformational change in GP2, releasing the fusion hydrophobic peptide. In Epomops franqueti (Franquet's epauletted fruit bat), this protein is Envelope glycoprotein (GP).